The primary structure comprises 636 residues: Probable potassium transport system protein Kup (636 aa).

12 consecutive transmembrane segments (helical) span residues 23–43, 57–77, 111–131, 148–168, 179–199, 217–237, 258–278, 287–307, 348–368, 377–397, 409–429, and 431–451; these read MALM…SPLY, PAHV…VVSL, WLLI…SMIT, HTLE…LFAI, LFGP…GYQI, FIAE…LALT, WFAM…ALLL, PFFL…ATVA, IYLP…VLLF, AYGF…FAVL, WMVL…ANIF, and IHEG…LMMT.

It belongs to the HAK/KUP transporter (TC 2.A.72) family.

The protein localises to the cell inner membrane. It carries out the reaction K(+)(in) + H(+)(in) = K(+)(out) + H(+)(out). Its function is as follows. Transport of potassium into the cell. Likely operates as a K(+):H(+) symporter. The polypeptide is Probable potassium transport system protein Kup (Bordetella bronchiseptica (strain ATCC BAA-588 / NCTC 13252 / RB50) (Alcaligenes bronchisepticus)).